A 152-amino-acid chain; its full sequence is DNA-binding transcriptional activator DecR (152 aa).

Positions 2-63 constitute an HTH asnC-type domain; sequence LDKIDRKLLA…LLDPEKIGLG (62 aa). A DNA-binding region (H-T-H motif) is located at residues 21–40; sequence LQALAEAVNLTTTPCWKRLK.

Functionally, plays a role in L-cysteine detoxification. Binds to the dlsT(yhaO)-yhaM operon promoter in the presence but not absence of L-cysteine; activates transcription from the dlsT(yhaO)-yhaM operon. This is DNA-binding transcriptional activator DecR (decR) from Escherichia coli O157:H7.